The chain runs to 190 residues: GTP cyclohydrolase 1 (190 aa).

Residues Cys75, His78, and Cys146 each contribute to the Zn(2+) site.

This sequence belongs to the GTP cyclohydrolase I family. As to quaternary structure, homomer.

The catalysed reaction is GTP + H2O = 7,8-dihydroneopterin 3'-triphosphate + formate + H(+). It participates in cofactor biosynthesis; 7,8-dihydroneopterin triphosphate biosynthesis; 7,8-dihydroneopterin triphosphate from GTP: step 1/1. The chain is GTP cyclohydrolase 1 from Campylobacter jejuni subsp. jejuni serotype O:6 (strain 81116 / NCTC 11828).